The sequence spans 308 residues: ADP-L-glycero-D-manno-heptose-6-epimerase (308 aa).

Residues 10–11 (FI), 31–32 (DN), K38, K53, 75–79 (EGACS), and N92 each bind NADP(+). Residue Y139 is the Proton acceptor of the active site. NADP(+) is bound at residue K143. N168 contacts substrate. Residues V169 and K177 each coordinate NADP(+). K177 (proton acceptor) is an active-site residue. Substrate is bound by residues S179, H186, 200–203 (FAGS), R208, and Y271.

The protein belongs to the NAD(P)-dependent epimerase/dehydratase family. HldD subfamily. In terms of assembly, homopentamer. NADP(+) is required as a cofactor.

The catalysed reaction is ADP-D-glycero-beta-D-manno-heptose = ADP-L-glycero-beta-D-manno-heptose. Its pathway is nucleotide-sugar biosynthesis; ADP-L-glycero-beta-D-manno-heptose biosynthesis; ADP-L-glycero-beta-D-manno-heptose from D-glycero-beta-D-manno-heptose 7-phosphate: step 4/4. In terms of biological role, catalyzes the interconversion between ADP-D-glycero-beta-D-manno-heptose and ADP-L-glycero-beta-D-manno-heptose via an epimerization at carbon 6 of the heptose. The sequence is that of ADP-L-glycero-D-manno-heptose-6-epimerase from Haemophilus influenzae (strain PittGG).